The sequence spans 125 residues: MQWQGRSVRKSTGGRYSPSRGKRRREIGSAPAETHIGIDRRKISRTYGGNNKVRALRCEYAAISNAKTGETKKVKIETVEENAANPNYVRRNLLTRGAIIRTELGRARITSRPGQHGVINAVLIE.

The segment at 1 to 34 (MQWQGRSVRKSTGGRYSPSRGKRRREIGSAPAET) is disordered.

The protein belongs to the eukaryotic ribosomal protein eS8 family. As to quaternary structure, part of the 30S ribosomal subunit.

The chain is Small ribosomal subunit protein eS8 from Methanospirillum hungatei JF-1 (strain ATCC 27890 / DSM 864 / NBRC 100397 / JF-1).